Here is a 140-residue protein sequence, read N- to C-terminus: Pro-vaccinia growth factor (140 aa).

An N-terminal signal peptide occupies residues 1 to 18 (MSMKYLMLLFAAMIIRSF). The Extracellular portion of the chain corresponds to 19–100 (ADSGNAIETT…SENPNTTTSY (82 aa)). A glycan (N-linked (GlcNAc...) asparagine; by host) is linked at Asn-34. In terms of domain architecture, EGF-like spans 41-81 (AIRLCGPEGDGYCLHGDCIHARDIDGMYCRCSHGYTGIRCQ). Intrachain disulfides connect Cys-45/Cys-58, Cys-53/Cys-69, and Cys-71/Cys-80. N-linked (GlcNAc...) asparagine; by host glycosylation occurs at Asn-95. The helical transmembrane segment at 101-121 (IPSPGIVLVLVGIIIITCCSL) threads the bilayer. Topologically, residues 122–140 (SVYRFTRRTKLPIQDMVVP) are cytoplasmic.

The protein belongs to the orthopoxvirus OPG019 family. In terms of assembly, vaccinia growth factor interacts with host EGFR and promotes EGFR dimerization.

The protein resides in the host membrane. Its subcellular location is the secreted. In terms of biological role, stimulates cellular proliferation (hyperplasia)and mobility around infected cells to promote rapid and efficient spread of infection. This effect is beneficial for virus replication in vivo, because poxviruses replicate possibly better in proliferating cells than in quiescent cells. Acts by binding host EGFR, inducing its dimerization, autophosphorylation and leading to activation of several cellular pathways regulating cell proliferation or cell survival. The activation by host EGFR of mitogen activated protein kinases (MAPK) and extracellular-signal regulated kinases (ERK) are essential for the positive effect of vaccinia growth factor on poxvirus virulence in vivo. This chain is Pro-vaccinia growth factor (OPG019), found in Vaccinia virus (strain L-IVP) (VACV).